Here is a 192-residue protein sequence, read N- to C-terminus: Phosphoheptose isomerase (192 aa).

The region spanning L37–K192 is the SIS domain. N52–G54 provides a ligand contact to substrate. H61 and E65 together coordinate Zn(2+). Residues E65, N93 to D94, S119 to S121, S124, and Q172 contribute to the substrate site. Zn(2+)-binding residues include Q172 and H180.

The protein belongs to the SIS family. GmhA subfamily. As to quaternary structure, homotetramer. Zn(2+) serves as cofactor.

It localises to the cytoplasm. The catalysed reaction is 2 D-sedoheptulose 7-phosphate = D-glycero-alpha-D-manno-heptose 7-phosphate + D-glycero-beta-D-manno-heptose 7-phosphate. Its pathway is carbohydrate biosynthesis; D-glycero-D-manno-heptose 7-phosphate biosynthesis; D-glycero-alpha-D-manno-heptose 7-phosphate and D-glycero-beta-D-manno-heptose 7-phosphate from sedoheptulose 7-phosphate: step 1/1. In terms of biological role, catalyzes the isomerization of sedoheptulose 7-phosphate in D-glycero-D-manno-heptose 7-phosphate. This Aeromonas salmonicida (strain A449) protein is Phosphoheptose isomerase.